Reading from the N-terminus, the 352-residue chain is Ubiquitin thioesterase otulin (352 aa).

A disordered region spans residues 1-48 (MSRGTMPQPEAWPGASCAETPAREAAATARDGGKAAASGQPRPEMQCP). Residues 18-37 (AETPAREAAATARDGGKAAA) are compositionally biased toward low complexity. Residues 52 to 57 (EEDMYR) carry the PIM motif motif. Phosphotyrosine is present on Tyr-56. Linear diubiquitin binding stretches follow at residues 95 to 96 (EW) and 124 to 126 (RGD). The 229-residue stretch at 118 to 346 (TSIRRVRGDN…DRHYNIPVRV (229 aa)) folds into the OTU domain. The active site involves Asp-126. Cys-129 serves as the catalytic Nucleophile. Linear diubiquitin binding regions lie at residues 255-259 (FFSVL), 283-289 (TGGLEQV), and 336-338 (DDR). His-339 is an active-site residue.

Belongs to the peptidase C65 family. Otulin subfamily. As to quaternary structure, interacts (via the PUB domain) with RNF31 (via the PIM motif); the interaction is direct. Interacts with DVL2. Post-translationally, ubiquitinated. Acetylated. In terms of processing, phosphorylated. Phosphorylation at Tyr-56 prevents interaction with RNF31; dephosphorylation promotes interaction with RNF31 and the LUBAC complex.

It is found in the cytoplasm. The catalysed reaction is Thiol-dependent hydrolysis of ester, thioester, amide, peptide and isopeptide bonds formed by the C-terminal Gly of ubiquitin (a 76-residue protein attached to proteins as an intracellular targeting signal).. In terms of biological role, deubiquitinase that specifically removes linear ('Met-1'-linked) polyubiquitin chains to substrates and acts as a regulator of angiogenesis and innate immune response. Required during angiogenesis, craniofacial and neuronal development by regulating the canonical Wnt signaling together with the LUBAC complex. Acts as a negative regulator of NF-kappa-B by regulating the activity of the LUBAC complex. OTULIN function is mainly restricted to homeostasis of the LUBAC complex: acts by removing 'Met-1'-linked autoubiquitination of the LUBAC complex, thereby preventing inactivation of the LUBAC complex. Acts as a key negative regulator of inflammation by restricting spontaneous inflammation and maintaining immune homeostasis. In myeloid cell, required to prevent unwarranted secretion of cytokines leading to inflammation and autoimmunity by restricting linear polyubiquitin formation. Plays a role in innate immune response by restricting linear polyubiquitin formation on LUBAC complex in response to NOD2 stimulation, probably to limit NOD2-dependent pro-inflammatory signaling. The sequence is that of Ubiquitin thioesterase otulin from Homo sapiens (Human).